The following is an 853-amino-acid chain: Transcription factor CPH2 (853 aa).

Disordered regions lie at residues 165–209 (EPPI…DKNS) and 296–353 (NMNP…VHHP). Residues 180 to 194 (TTTVSSTNSITNTTK) are compositionally biased toward low complexity. Positions 205-274 (KDKNSHNMIE…TKATEYIKHL (70 aa)) constitute a bHLH domain. Over residues 301–315 (SLPPPPQQMQAPPQP) the composition is skewed to pro residues. Residues 330–352 (TPASQYPSPQQQVSPTQQQTVHH) are compositionally biased toward low complexity.

Its subcellular location is the nucleus. Its function is as follows. Transcription factor that positively controls filamentous growth, virulence, and invasiveness. Binds directly to the two SRE-1-like elements upstream of TEC1 and thus positively regulates expression of this important hyphal growth regulator. Functions independently of known signaling cascades involving EFG1. Also regulates gene expression during intestinal colonization but is not involved in host cell adhesion. This is Transcription factor CPH2 (CPH2) from Candida albicans (strain SC5314 / ATCC MYA-2876) (Yeast).